The following is a 578-amino-acid chain: 2-succinyl-5-enolpyruvyl-6-hydroxy-3-cyclohexene-1-carboxylate synthase (578 aa).

The protein belongs to the TPP enzyme family. MenD subfamily. Homodimer. The cofactor is Mg(2+). It depends on Mn(2+) as a cofactor. Thiamine diphosphate serves as cofactor.

It catalyses the reaction isochorismate + 2-oxoglutarate + H(+) = 5-enolpyruvoyl-6-hydroxy-2-succinyl-cyclohex-3-ene-1-carboxylate + CO2. It functions in the pathway quinol/quinone metabolism; 1,4-dihydroxy-2-naphthoate biosynthesis; 1,4-dihydroxy-2-naphthoate from chorismate: step 2/7. Its pathway is quinol/quinone metabolism; menaquinone biosynthesis. Its function is as follows. Catalyzes the thiamine diphosphate-dependent decarboxylation of 2-oxoglutarate and the subsequent addition of the resulting succinic semialdehyde-thiamine pyrophosphate anion to isochorismate to yield 2-succinyl-5-enolpyruvyl-6-hydroxy-3-cyclohexene-1-carboxylate (SEPHCHC). The polypeptide is 2-succinyl-5-enolpyruvyl-6-hydroxy-3-cyclohexene-1-carboxylate synthase (Prosthecochloris aestuarii (strain DSM 271 / SK 413)).